The sequence spans 329 residues: tRNA N6-adenosine threonylcarbamoyltransferase (329 aa).

Fe cation-binding residues include His110 and His114. Residues 132–136, Asp165, Gly178, and Asn271 contribute to the substrate site; that span reads VISGG. A Fe cation-binding site is contributed by Asp299.

This sequence belongs to the KAE1 / TsaD family. Requires Fe(2+) as cofactor.

It is found in the cytoplasm. It catalyses the reaction L-threonylcarbamoyladenylate + adenosine(37) in tRNA = N(6)-L-threonylcarbamoyladenosine(37) in tRNA + AMP + H(+). In terms of biological role, required for the formation of a threonylcarbamoyl group on adenosine at position 37 (t(6)A37) in tRNAs that read codons beginning with adenine. Is involved in the transfer of the threonylcarbamoyl moiety of threonylcarbamoyl-AMP (TC-AMP) to the N6 group of A37, together with TsaE and TsaB. TsaD likely plays a direct catalytic role in this reaction. In Neorickettsia sennetsu (strain ATCC VR-367 / Miyayama) (Ehrlichia sennetsu), this protein is tRNA N6-adenosine threonylcarbamoyltransferase.